The chain runs to 1172 residues: MGLHLTVPGLRRDGRGVQSNSHDTSSKTTADISRCPQHTDAGLQRAATPGISRLLGISSRSVTLTKPRSATRGNSRYHWVPAAAGWTVGVIATLSLLASVSPLIRWIIKVPREFINDYLFNFPDTNFAWSFVLALLAAALTARKRIAWLVLLANMVLAAVVNAAEIAAGGNTAAESFGENLGFAVHVVAIVVLVLGYREFWAKVRRGALFRAAAVWLAGAVVGIVASWGLVELFPGSLAPDERLGYAANRVVGFALADPDLFTGRPHVFLNAIFGLFGAFALIGAAIVLFLSQRADNALTGEDESAIRGLLDLYGKDDSLGYFATRRDKSVVFASSGRACITYRVEVGVCLASGDPVGDHRAWPQAVDAWLRLCQTYGWAPGVMGASSQGAQTYREAGLTALELGDEAILRPADFKLSGPEMRGVRQAVTRARRAGLTVRIRRHRDIAEDEMAQTITRADSWRDTETERGFSMALGRLGDPADSDCLLVEAIDPHNQVLAMLSLVPWGTTGVSLDLMRRSPQSPNGTIELMVSELALHAESLGITRISLNFAVFRAAFEQGAQLGAGPVARLWRGLLVFFSRWWQLETLYRSNMKYQPEWVPRYACYEDARVIPRVGVASVIAEGFLVLPFSRRNRVHTGHHPAVPERLAATGLLHHDGSAPDVSGLRQVGLTNGDGVERRLPEQVRVRFDKLEKLRSSGIDAFPVGRPPSHTVAQALAADHQASVSVSGRIMRIRNYGGVLFAQLRDWSGEMQVLLDNSRLDQGCAADFNAATDLGDLVEMTGHMGASKTGTPSLIVSGWRLIGKCLRPLPNKWKGLLDPEARVRTRYLDLAVNAESRALITARSSVLRAVRETLFAKGFVEVETPILQQLHGGATARPFVTHINTYSMDLFLRIAPELYLKRLCVGGVERVFELGRAFRNEGVDFSHNPEFTLLEAYQAHADYLEWIDGCRELIQNAAQAANGAPIAMRPRTDKGSDGTRHHLEPVDISGIWPVRTVHDAISEALGERIDADTGLTTLRKLCDAAGVPYRTQWDAGAVVLELYEHLVECRTEQPTFYIDFPTSVSPLTRPHRSKRGVAERWDLVAWGIELGTAYSELTDPVEQRRRLQEQSLLAAGGDPEAMELDEDFLQAMEYAMPPTGGLGMGIDRVVMLITGRSIRETLPFPLAKPH.

The segment at 1 to 34 (MGLHLTVPGLRRDGRGVQSNSHDTSSKTTADISR) is disordered. The tract at residues 1 to 663 (MGLHLTVPGL…LLHHDGSAPD (663 aa)) is phosphatidylglycerol lysyltransferase. Polar residues predominate over residues 17 to 31 (VQSNSHDTSSKTTAD). The next 7 helical transmembrane spans lie at 80 to 100 (VPAAAGWTVGVIATLSLLASV), 122 to 142 (FPDTNFAWSFVLALLAAALTA), 146 to 166 (IAWLVLLANMVLAAVVNAAEI), 177 to 197 (FGENLGFAVHVVAIVVLVLGY), 214 to 234 (AVWLAGAVVGIVASWGLVELF), 272 to 292 (AIFGLFGAFALIGAAIVLFLS), and 612 to 632 (VIPRVGVASVIAEGFLVLPFS). Residues 664-1172 (VSGLRQVGLT…TLPFPLAKPH (509 aa)) form a lysine--tRNA ligase region. The OB DNA-binding region spans 726–804 (VSVSGRIMRI…SLIVSGWRLI (79 aa)). Asp1084 and Glu1091 together coordinate Mg(2+).

This sequence in the N-terminal section; belongs to the LPG synthetase family. The protein in the C-terminal section; belongs to the class-II aminoacyl-tRNA synthetase family. Mg(2+) is required as a cofactor.

The protein localises to the cell membrane. The enzyme catalyses tRNA(Lys) + L-lysine + ATP = L-lysyl-tRNA(Lys) + AMP + diphosphate. It catalyses the reaction L-lysyl-tRNA(Lys) + a 1,2-diacyl-sn-glycero-3-phospho-(1'-sn-glycerol) = a 1,2-diacyl-sn-glycero-3-phospho-1'-(3'-O-L-lysyl)-sn-glycerol + tRNA(Lys). Catalyzes the production of L-lysyl-tRNA(Lys)transfer and the transfer of a lysyl group from L-lysyl-tRNA(Lys) to membrane-bound phosphatidylglycerol (PG), which produces lysylphosphatidylglycerol (LPG), one of the components of the bacterial membrane with a positive net charge. LPG synthesis contributes to the resistance to cationic antimicrobial peptides (CAMPs) and likely protects M.tuberculosis against the CAMPs produced by competiting microorganisms (bacteriocins). In fact, the modification of anionic phosphatidylglycerol with positively charged L-lysine results in repulsion of the peptides. This is Lysylphosphatidylglycerol biosynthesis bifunctional protein LysX (lysX) from Mycobacterium tuberculosis (strain F11).